A 130-amino-acid chain; its full sequence is Fluoride-specific ion channel FluC 2 (130 aa).

The next 4 membrane-spanning stretches (helical) occupy residues 4-24 (GLST…GAIC), 38-58 (NLWG…FFLA), 72-92 (LYLL…SLIL), and 103-123 (WMEL…FISL). Na(+)-binding residues include Gly82 and Ser85.

It belongs to the fluoride channel Fluc/FEX (TC 1.A.43) family.

The protein localises to the cell inner membrane. It carries out the reaction fluoride(in) = fluoride(out). Na(+) is not transported, but it plays an essential structural role and its presence is essential for fluoride channel function. In terms of biological role, fluoride-specific ion channel. Important for reducing fluoride concentration in the cell, thus reducing its toxicity. This Prochlorococcus marinus (strain SARG / CCMP1375 / SS120) protein is Fluoride-specific ion channel FluC 2.